The sequence spans 134 residues: Prefoldin subunit 4 (134 aa).

The residue at position 2 (Ala2) is an N-acetylalanine. Residue Ser125 is modified to Phosphoserine.

Belongs to the prefoldin subunit beta family. In terms of assembly, heterohexamer of two PFD-alpha type and four PFD-beta type subunits. Interacts with URI1; the interaction is phosphorylation-dependent and occurs in a growth-dependent manner.

It is found in the nucleus. Its subcellular location is the cytoplasm. The protein localises to the mitochondrion. Functionally, binds specifically to cytosolic chaperonin (c-CPN) and transfers target proteins to it. Binds to nascent polypeptide chain and promotes folding in an environment in which there are many competing pathways for nonnative proteins. The polypeptide is Prefoldin subunit 4 (PFDN4) (Homo sapiens (Human)).